Consider the following 308-residue polypeptide: Ectoine dioxygenase (308 aa).

Gln-131 provides a ligand contact to L-ectoine. Lys-137 contacts 2-oxoglutarate. Fe cation is bound by residues His-148, Asp-150, and His-249.

This sequence belongs to the PhyH family. EctD subfamily. Homodimer. It depends on Fe(2+) as a cofactor.

The catalysed reaction is L-ectoine + 2-oxoglutarate + O2 = 5-hydroxyectoine + succinate + CO2. In terms of biological role, involved in the biosynthesis of 5-hydroxyectoine, called compatible solute, which helps organisms to survive extreme osmotic stress by acting as a highly soluble organic osmolyte. Catalyzes the 2-oxoglutarate-dependent selective hydroxylation of L-ectoine to yield (4S,5S)-5-hydroxyectoine. The sequence is that of Ectoine dioxygenase from Bordetella parapertussis (strain 12822 / ATCC BAA-587 / NCTC 13253).